The primary structure comprises 92 residues: Putative membrane protein insertion efficiency factor (92 aa).

The protein belongs to the UPF0161 family.

The protein resides in the cell inner membrane. Could be involved in insertion of integral membrane proteins into the membrane. This is Putative membrane protein insertion efficiency factor from Synechococcus sp. (strain CC9902).